The chain runs to 146 residues: Hemoglobin subunit beta-1 (146 aa).

The Globin domain maps to 2 to 146; the sequence is HWTEKERTII…VVSALGKQYH (145 aa). Heme b is bound by residues histidine 63 and histidine 92.

This sequence belongs to the globin family. As to quaternary structure, hb1 is a heterotetramer of two alpha chains and two beta-1 chains. In terms of tissue distribution, red blood cells.

Its function is as follows. Involved in oxygen transport from gills to the various peripheral tissues. This is Hemoglobin subunit beta-1 from Dissostichus eleginoides (Patagonian toothfish).